Reading from the N-terminus, the 918-residue chain is Probable lipoxygenase 6 (918 aa).

Residues 56-76 (AASPSSGIKGGGAGERRPAPE) form a disordered region. Residues 90–218 (QKEDIKEAVA…ELPTKRVFFS (129 aa)) form the PLAT domain. The region spanning 221-918 (PYLPSETPPG…CRGVPNSISI (698 aa)) is the Lipoxygenase domain. The Fe cation site is built by H573, H578, H765, N769, and I918.

The protein belongs to the lipoxygenase family. Fe cation serves as cofactor.

The catalysed reaction is (9Z,12Z)-octadecadienoate + O2 = (13S)-hydroperoxy-(9Z,11E)-octadecadienoate. The enzyme catalyses (9Z,12Z,15Z)-octadecatrienoate + O2 = (13S)-hydroperoxy-(9Z,11E,15Z)-octadecatrienoate. Its pathway is lipid metabolism; oxylipin biosynthesis. Functionally, plant lipoxygenase may be involved in a number of diverse aspects of plant physiology including growth and development, pest resistance, and senescence or responses to wounding. Catalyzes the hydroperoxidation of lipids containing a cis,cis-1,4-pentadiene structure. The sequence is that of Probable lipoxygenase 6 from Oryza sativa subsp. japonica (Rice).